Consider the following 175-residue polypeptide: Protein GrpE (175 aa).

Residues 1–35 (MSEQKQEIENENAQNSENLQDDLQDNEKNETNELQ) are disordered. Basic and acidic residues predominate over residues 25–35 (DNEKNETNELQ).

Belongs to the GrpE family. In terms of assembly, homodimer.

The protein localises to the cytoplasm. In terms of biological role, participates actively in the response to hyperosmotic and heat shock by preventing the aggregation of stress-denatured proteins, in association with DnaK and GrpE. It is the nucleotide exchange factor for DnaK and may function as a thermosensor. Unfolded proteins bind initially to DnaJ; upon interaction with the DnaJ-bound protein, DnaK hydrolyzes its bound ATP, resulting in the formation of a stable complex. GrpE releases ADP from DnaK; ATP binding to DnaK triggers the release of the substrate protein, thus completing the reaction cycle. Several rounds of ATP-dependent interactions between DnaJ, DnaK and GrpE are required for fully efficient folding. The polypeptide is Protein GrpE (Campylobacter jejuni (strain RM1221)).